A 923-amino-acid polypeptide reads, in one-letter code: Cell cycle and apoptosis regulator protein 2 (923 aa).

Residues 1–35 are disordered; sequence MSQFKRQRINPLPGGRNFSGTASTSLLGPPPGLLT. T35 is subject to Phosphothreonine. N6-acetyllysine; by KAT8 is present on K112. Residue K123 is modified to N6-methyllysine. Phosphoserine is present on S124. Disordered regions lie at residues 178–218, 446–510, and 568–643; these read LNRF…KKPR, KAAE…PAVI, and VSPP…SEDL. The residue at position 180 (R180) is an Omega-N-methylarginine. Basic and acidic residues predominate over residues 188–200; it reads GRLDQGRSDDYDS. K215 carries the N6-acetyllysine; by KAT8 modification. The segment covering 446–458 has biased composition (low complexity); it reads KAAEAAPPTQEAQ. Residue T454 is modified to Phosphothreonine; by ATM, ATR and CK2. T484 is subject to Phosphothreonine. S569 carries the phosphoserine modification. Residues 572–602 are compositionally biased toward basic and acidic residues; that stretch reads EPEKEEAAKEEATKEEEAIKEEVVKEPKDEA. Residue K591 forms a Glycyl lysine isopeptide (Lys-Gly) (interchain with G-Cter in SUMO2 and SUMO3); alternate linkage. A Glycyl lysine isopeptide (Lys-Gly) (interchain with G-Cter in SUMO2); alternate cross-link involves residue K591. Positions 610-670 are interaction with MCC; sequence ESEAPLKEDG…EEFAGAKLED (61 aa). 6 positions are modified to phosphoserine: S627, S675, S678, S681, S687, and S808. Residues 704–923 form an interaction with NR1D1 region; the sequence is DCLLAFVFFD…VEKEEPAPSN (220 aa). The stretch at 829–909 forms a coiled coil; sequence LENKIHTLEL…QLEIQRVVEK (81 aa). Position 897 is a phosphothreonine (T897).

Component of the DBIRD complex. Interacts with ZNF326/ZIRD; the interaction is direct. Interacts (via N-terminus) with SIRT1, which inhibits the deacetylation of substrates. Interacts (via N-terminus) with SUV39H1; this interaction abolishes the interaction with SIRT1. Component of a nuclear receptor-mediated transcription complex composed of at least ZNF335, CCAR2 and EMSY; the complex stimulates the transcription of nuclear receptor target genes such as SOX9 and HOXA1. Within the complex interacts with EMSY and interacts with ZNF335 (via C-terminus). Components of this complex may associate with components of a histone methylation complex to form a complex at least composed of ZNF335, HCFC1, CCAR2, EMSY, MKI67, RBBP5, ASH2L and WDR5. Within this complex, interacts with ASH2L. Interacts with NR1D1. Interacts (via N-terminus) with ESR1 and ESR2. Interacts (via N-terminus) with HDAC3 (via C-terminus). Interacts with HDAC1 and MED2F. Interacts with MCC. Interacts (via N-terminus) with NR1H2 and NR1H3 in a ligand-independent manner. Interacts with CSNK2A1. Interacts (via N-terminus) with p53/TP53. Interacts (via N-terminus) with BRCA1 (via the BRCT domains). Interacts (via N-terminus) with CHEK2 (via protein kinase domain). Interacts with PSEM3. Interacts (via N-terminus) with PSIA3 and SENP1. The sumoylated form shows a preferential interaction with SIRT1 as compared to its unmodified form. Interacts with CECR2; may form part of the CERF-1 and/or CEF-5 ISWI chromatin remodeling complexes in embryonic stem cells. In terms of processing, ATM/ATR-mediated phosphorylation at Thr-454 upon DNA damage promotes binding to SIRT1. Phosphorylation at Thr-454 promotes its sumoylation by switching the binding partner of CCAR2 from SENP1 to PIAS3. Post-translationally, acetylation at Lys-112 and Lys-215 by KAT8 prevents inhibitory binding to SIRT1 and increases its deacetylase activity. Genotoxic stress induces its sumoylation and sumoylation promotes the SIRT1-CCAR2 interaction which in turn inhibits SIRT1-mediated deacetylation of p53/TP53. Sumoylation leads to transcriptional activation of p53/TP53 by sequestering SIRT1 from p53/TP53. Desumoylated by SENP1. In terms of tissue distribution, expressed in gastric carcinoma tissue and the expression gradually increases with the progression of the carcinoma (at protein level). Expressed ubiquitously in normal tissues. Expressed in 84 to 100% of neoplastic breast, lung, and colon tissues.

It is found in the nucleus. The protein resides in the cytoplasm. Its subcellular location is the cytoskeleton. It localises to the spindle. Functionally, core component of the DBIRD complex, a multiprotein complex that acts at the interface between core mRNP particles and RNA polymerase II (RNAPII) and integrates transcript elongation with the regulation of alternative splicing: the DBIRD complex affects local transcript elongation rates and alternative splicing of a large set of exons embedded in (A + T)-rich DNA regions. Inhibits SIRT1 deacetylase activity leading to increasing levels of p53/TP53 acetylation and p53-mediated apoptosis. Inhibits SUV39H1 methyltransferase activity. Mediates ligand-dependent transcriptional activation by nuclear hormone receptors. Plays a critical role in maintaining genomic stability and cellular integrity following UV-induced genotoxic stress. Regulates the circadian expression of the core clock components NR1D1 and BMAL1. Enhances the transcriptional repressor activity of NR1D1 through stabilization of NR1D1 protein levels by preventing its ubiquitination and subsequent degradation. Represses the ligand-dependent transcriptional activation function of ESR2. Acts as a regulator of PCK1 expression and gluconeogenesis by a mechanism that involves, at least in part, both NR1D1 and SIRT1. Negatively regulates the deacetylase activity of HDAC3 and can alter its subcellular localization. Positively regulates the beta-catenin pathway (canonical Wnt signaling pathway) and is required for MCC-mediated repression of the beta-catenin pathway. Represses ligand-dependent transcriptional activation function of NR1H2 and NR1H3 and inhibits the interaction of SIRT1 with NR1H3. Plays an important role in tumor suppression through p53/TP53 regulation; stabilizes p53/TP53 by affecting its interaction with ubiquitin ligase MDM2. Represses the transcriptional activator activity of BRCA1. Inhibits SIRT1 in a CHEK2 and PSEM3-dependent manner and inhibits the activity of CHEK2 in vitro. This chain is Cell cycle and apoptosis regulator protein 2 (CCAR2), found in Homo sapiens (Human).